The following is a 74-amino-acid chain: Putative sulfur carrier protein NMA0882 (74 aa).

The active-site Cysteine persulfide intermediate is Cys13.

The protein belongs to the sulfur carrier protein TusA family.

This Neisseria meningitidis serogroup A / serotype 4A (strain DSM 15465 / Z2491) protein is Putative sulfur carrier protein NMA0882.